The following is a 144-amino-acid chain: 3-hydroxyacyl-[acyl-carrier-protein] dehydratase FabZ (144 aa).

The active site involves His-51.

It belongs to the thioester dehydratase family. FabZ subfamily.

Its subcellular location is the cytoplasm. It carries out the reaction a (3R)-hydroxyacyl-[ACP] = a (2E)-enoyl-[ACP] + H2O. Its function is as follows. Involved in unsaturated fatty acids biosynthesis. Catalyzes the dehydration of short chain beta-hydroxyacyl-ACPs and long chain saturated and unsaturated beta-hydroxyacyl-ACPs. In Lactococcus lactis subsp. cremoris (strain SK11), this protein is 3-hydroxyacyl-[acyl-carrier-protein] dehydratase FabZ.